The chain runs to 617 residues: Lipoteichoic acid synthase-like YvgJ (617 aa).

Over 1–10 the chain is Cytoplasmic; that stretch reads MKGTFFHNQR. The helical transmembrane segment at 11–31 threads the bilayer; that stretch reads FLCFSILFMWIKTYVIYKLGF. At 32–41 the chain is on the extracellular side; sequence DLQIDTLLEE. A helical membrane pass occupies residues 42 to 62; the sequence is LMLLVNPLSFILPLFGIGLFL. Over 63-68 the chain is Cytoplasmic; that stretch reads KENKQR. A helical transmembrane segment spans residues 69–89; sequence AFLLIANLVLTVILISNTIFY. The Extracellular portion of the chain corresponds to 90 to 115; sequence GFYIDFITIPVLFQASNMSDMGSSVK. A helical membrane pass occupies residues 116 to 136; the sequence is ELFHPLFIALFVDLVFLLLFA. Over 137–153 the chain is Cytoplasmic; sequence RKTKHPQTKAAPHTIKR. The helical transmembrane segment at 154 to 171 threads the bilayer; sequence YYAASCGMLLCTLALAEV. The Extracellular portion of the chain corresponds to 172-617; sequence QQPKLLAHSF…LNGDLLRFSE (446 aa). Mn(2+)-binding residues include glutamate 251 and threonine 293. Residue threonine 293 is part of the active site. Position 408 (histidine 408) interacts with substrate. Residues aspartate 467 and histidine 468 each coordinate Mn(2+).

Belongs to the LTA synthase family. Proteolytically cleaved.

Its subcellular location is the cell membrane. It localises to the secreted. The chain is Lipoteichoic acid synthase-like YvgJ (yvgJ) from Bacillus subtilis (strain 168).